A 312-amino-acid chain; its full sequence is Very-long-chain 3-oxoacyl-CoA reductase (312 aa).

3 helical membrane passes run V33 to V53, G181 to Y201, and H274 to M294. Residue G48–L77 participates in NADP(+) binding. S188 lines the substrate pocket. The active-site Proton acceptor is the Y201.

It belongs to the short-chain dehydrogenases/reductases (SDR) family. 17-beta-HSD 3 subfamily. As to expression, brain.

It is found in the endoplasmic reticulum membrane. The enzyme catalyses a very-long-chain (3R)-3-hydroxyacyl-CoA + NADP(+) = a very-long-chain 3-oxoacyl-CoA + NADPH + H(+). It catalyses the reaction 17beta-estradiol + NAD(+) = estrone + NADH + H(+). It carries out the reaction 17beta-estradiol + NADP(+) = estrone + NADPH + H(+). The catalysed reaction is 3-oxooctadecanoyl-CoA + NADPH + H(+) = (3R)-hydroxyoctadecanoyl-CoA + NADP(+). The enzyme catalyses (7Z,10Z,13Z,16Z)-3-oxodocosatetraenoyl-CoA + NADPH + H(+) = (3R)-hydroxy-(7Z,10Z,13Z,16Z)-docosatetraenoyl-CoA + NADP(+). It catalyses the reaction 3-oxo-(7Z,10Z,13Z,16Z,19Z)-docosapentaenoyl-CoA + NADPH + H(+) = (3R)-hydroxy-(7Z,10Z,13Z,16Z,19Z)-docosapentaenoyl-CoA + NADP(+). It carries out the reaction (8Z,11Z,14Z)-3-oxoeicosatrienoyl-CoA + NADPH + H(+) = (3R)-hydroxy-(8Z,11Z,14Z)-eicosatrienoyl-CoA + NADP(+). It participates in lipid metabolism; fatty acid biosynthesis. Its pathway is steroid biosynthesis; estrogen biosynthesis. Catalyzes the second of the four reactions of the long-chain fatty acids elongation cycle. This endoplasmic reticulum-bound enzymatic process, allows the addition of two carbons to the chain of long- and very long-chain fatty acids/VLCFAs per cycle. This enzyme has a 3-ketoacyl-CoA reductase activity, reducing 3-ketoacyl-CoA to 3-hydroxyacyl-CoA, within each cycle of fatty acid elongation. Thereby, it may participate in the production of VLCFAs of different chain lengths that are involved in multiple biological processes as precursors of membrane lipids and lipid mediators. May also catalyze the transformation of estrone (E1) into estradiol (E2) and play a role in estrogen formation. This is Very-long-chain 3-oxoacyl-CoA reductase (HSD17B12) from Anas platyrhynchos (Mallard).